Consider the following 260-residue polypeptide: uncharacterized protein (260 aa).

6 helical membrane-spanning segments follow: residues 39 to 59, 68 to 88, 111 to 131, 159 to 179, 193 to 213, and 214 to 234; these read IFYL…LIEA, IIVG…SFLI, FLGS…FFLG, LIFS…LFKI, FIYL…ILSQ, and FILV…IKLI.

This sequence belongs to the TatC family.

It is found in the mitochondrion membrane. This is an uncharacterized protein from Reclinomonas americana.